The following is a 308-amino-acid chain: F420-non-reducing hydrogenase subunit G (308 aa).

Belongs to the [NiFe]/[NiFeSe] hydrogenase small subunit family. In terms of assembly, the F420-non-reducing hydrogenase is composed of three subunits; MvhA, MvhD and MvhG. It forms a complex with the heterodisulfide reductase (hdr).

Functionally, part of a complex that provides reducing equivalents for heterodisulfide reductase. The sequence is that of F420-non-reducing hydrogenase subunit G (mvhG) from Methanothermobacter marburgensis (strain ATCC BAA-927 / DSM 2133 / JCM 14651 / NBRC 100331 / OCM 82 / Marburg) (Methanobacterium thermoautotrophicum).